A 672-amino-acid chain; its full sequence is Leucine-rich repeat receptor-like protein kinase PXC1 (672 aa).

Residues 1–21 (MAAKPLLLPLLLLLHLSITLA) form the signal peptide. Residues 22-269 (QNDTNALTLF…IHSHRGIKPG (248 aa)) are Extracellular-facing. 3 N-linked (GlcNAc...) asparagine glycosylation sites follow: Asn-23, Asn-44, and Asn-101. Residues 87–110 (LDQLRLLDLHDNRLNGTVSPLTNC) form an LRR 1 repeat. A Glycyl lysine isopeptide (Lys-Gly) (interchain with G-Cter in ubiquitin) cross-link involves residue Lys-111. LRR repeat units follow at residues 112 to 134 (NLRL…ISFL), 135 to 158 (KRMI…ILGF), 160 to 181 (RVLT…FSQM), and 182 to 205 (KSLL…VVKK). 2 N-linked (GlcNAc...) asparagine glycosylation sites follow: Asn-188 and Asn-197. Polar residues predominate over residues 233 to 249 (ESSNTDQIVPSNPTSIP). The disordered stretch occupies residues 233 to 254 (ESSNTDQIVPSNPTSIPHSPVS). Residues 270–290 (IIAAVIGGCVAVIVLVSFGFA) traverse the membrane as a helical segment. The Cytoplasmic segment spans residues 291–672 (FCCGRLDRNG…MSPSLATTDG (382 aa)). The interval 300-333 (GERSKSGSVETGFVGGGEGKRRSSYGEGGESDAT) is disordered. The 289-residue stretch at 357-645 (KASAEMLGKG…AEVVKMVEEI (289 aa)) folds into the Protein kinase domain. ATP contacts are provided by residues 363 to 371 (LGKGSLGTV) and Lys-386. The interval 650-672 (SPVGEDFDESRNSMSPSLATTDG) is disordered. Positions 661 to 672 (NSMSPSLATTDG) are enriched in polar residues.

The protein belongs to the protein kinase superfamily. Ser/Thr protein kinase family. Expressed in the vascular strands of cotyledons, the shoot apex, hypocotyls, roots, leaves, stems and flowers.

The protein localises to the cell membrane. Leucine-rich repeat receptor-like protein kinase involved in secondary cell wall formation in xylem fibers. May play a role in a regulatory network which also incorporates the TDR/PXY signaling pathway and regulates the maturation of interfascicular fiber cells. May promote the initiation of secondary cell wall deposition during the procedure of cell expansion. The polypeptide is Leucine-rich repeat receptor-like protein kinase PXC1 (Arabidopsis thaliana (Mouse-ear cress)).